Here is a 75-residue protein sequence, read N- to C-terminus: UPF0352 protein VV1_3121 (75 aa).

It belongs to the UPF0352 family.

The protein is UPF0352 protein VV1_3121 of Vibrio vulnificus (strain CMCP6).